The following is a 307-amino-acid chain: UPF0276 protein Bphyt_5128 (307 aa).

It belongs to the UPF0276 family.

This is UPF0276 protein Bphyt_5128 from Paraburkholderia phytofirmans (strain DSM 17436 / LMG 22146 / PsJN) (Burkholderia phytofirmans).